The primary structure comprises 438 residues: Serine hydroxymethyltransferase (438 aa).

(6S)-5,6,7,8-tetrahydrofolate contacts are provided by residues Leu-133 and 137–139 (GHL). Lys-242 carries the post-translational modification N6-(pyridoxal phosphate)lysine.

Belongs to the SHMT family. In terms of assembly, homodimer. Pyridoxal 5'-phosphate serves as cofactor.

It is found in the cytoplasm. The enzyme catalyses (6R)-5,10-methylene-5,6,7,8-tetrahydrofolate + glycine + H2O = (6S)-5,6,7,8-tetrahydrofolate + L-serine. The protein operates within one-carbon metabolism; tetrahydrofolate interconversion. It functions in the pathway amino-acid biosynthesis; glycine biosynthesis; glycine from L-serine: step 1/1. In terms of biological role, catalyzes the reversible interconversion of serine and glycine with tetrahydrofolate (THF) serving as the one-carbon carrier. This reaction serves as the major source of one-carbon groups required for the biosynthesis of purines, thymidylate, methionine, and other important biomolecules. Also exhibits THF-independent aldolase activity toward beta-hydroxyamino acids, producing glycine and aldehydes, via a retro-aldol mechanism. This is Serine hydroxymethyltransferase from Brucella ovis (strain ATCC 25840 / 63/290 / NCTC 10512).